The sequence spans 524 residues: Bifunctional purine biosynthesis protein PurH (524 aa).

An MGS-like domain is found at 1 to 149 (MSDPLIKRAL…KNNESVTVLT (149 aa)).

Belongs to the PurH family.

The enzyme catalyses (6R)-10-formyltetrahydrofolate + 5-amino-1-(5-phospho-beta-D-ribosyl)imidazole-4-carboxamide = 5-formamido-1-(5-phospho-D-ribosyl)imidazole-4-carboxamide + (6S)-5,6,7,8-tetrahydrofolate. It carries out the reaction IMP + H2O = 5-formamido-1-(5-phospho-D-ribosyl)imidazole-4-carboxamide. It participates in purine metabolism; IMP biosynthesis via de novo pathway; 5-formamido-1-(5-phospho-D-ribosyl)imidazole-4-carboxamide from 5-amino-1-(5-phospho-D-ribosyl)imidazole-4-carboxamide (10-formyl THF route): step 1/1. It functions in the pathway purine metabolism; IMP biosynthesis via de novo pathway; IMP from 5-formamido-1-(5-phospho-D-ribosyl)imidazole-4-carboxamide: step 1/1. This chain is Bifunctional purine biosynthesis protein PurH, found in Chlorobium phaeovibrioides (strain DSM 265 / 1930) (Prosthecochloris vibrioformis (strain DSM 265)).